Consider the following 356-residue polypeptide: D-amino-acid oxidase (356 aa).

The N-terminal stretch at 1-17 (MAKIVVIGAGVAGLTTA) is a signal peptide. Ala-9, Ser-44, Gly-48, and Asn-50 together coordinate FAD. Phe-54 serves as a coordination point for anthranilate. Residue Val-171 coordinates FAD. Residue Asn-192 is glycosylated (N-linked (GlcNAc...) asparagine). Residue Tyr-243 coordinates anthranilate. Tyr-243 is a (R)-lactate binding site. Residue Asn-262 is glycosylated (N-linked (GlcNAc...) asparagine). Arg-302, Ala-329, Gly-332, Tyr-333, and Gln-334 together coordinate FAD. Arg-302 contacts anthranilate. Arg-302 is a (R)-lactate binding site.

The protein belongs to the DAMOX/DASOX family. Requires FAD as cofactor.

The protein localises to the peroxisome matrix. The catalysed reaction is a D-alpha-amino acid + O2 + H2O = a 2-oxocarboxylate + H2O2 + NH4(+). It catalyses the reaction D-alanine + O2 + H2O = pyruvate + H2O2 + NH4(+). It carries out the reaction D-serine + O2 + H2O = 3-hydroxypyruvate + H2O2 + NH4(+). The enzyme catalyses D-phenylalanine + O2 + H2O = 3-phenylpyruvate + H2O2 + NH4(+). The catalysed reaction is D-lysine + O2 + H2O = 6-amino-2-oxohexanoate + H2O2 + NH4(+). It catalyses the reaction D-tyrosine + O2 + H2O = 3-(4-hydroxyphenyl)pyruvate + H2O2 + NH4(+). It carries out the reaction D-methionine + O2 + H2O = 4-methylsulfanyl-2-oxobutanoate + H2O2 + NH4(+). The enzyme catalyses D-tryptophan + O2 + H2O = indole-3-pyruvate + H2O2 + NH4(+). The catalysed reaction is D-leucine + O2 + H2O = 4-methyl-2-oxopentanoate + H2O2 + NH4(+). It catalyses the reaction D-valine + O2 + H2O = 3-methyl-2-oxobutanoate + H2O2 + NH4(+). Its activity is regulated as follows. Inhibited by benzoate and hypochlorite. Catalyzes the oxidative deamination of D-amino acids with broad substrate specificity. Enables the organism to utilize D-amino acids as a source of nutrients. In Trigonopsis variabilis (Yeast), this protein is D-amino-acid oxidase.